The following is a 41-amino-acid chain: Photosystem II reaction center protein Y (41 aa).

N-formylmethionine is present on Met1. Topologically, residues Met1–Arg4 are lumenal. The helical transmembrane segment at Val5–Ile23 threads the bilayer. The Cytoplasmic portion of the chain corresponds to Leu24–Ala41.

It belongs to the PsbY family. In terms of assembly, PSII is composed of 1 copy each of membrane proteins PsbA, PsbB, PsbC, PsbD, PsbE, PsbF, PsbH, PsbI, PsbJ, PsbK, PsbL, PsbM, PsbT, PsbX, PsbY, PsbZ, Psb30/Ycf12, peripheral proteins PsbO, CyanoQ (PsbQ), PsbU, PsbV and a large number of cofactors. It forms dimeric complexes. This protein is only loosely associated with PSII, and is not often found in crystals. Found on the exterior of the PSII dimer, near cytochrome b559 (psbE and psbF). Requires PSII binds multiple chlorophylls, carotenoids and specific lipids. as cofactor.

It is found in the cellular thylakoid membrane. Its function is as follows. Loosely associated component of the core of photosystem II, it is not always seen in crystals. PSII is a light-driven water plastoquinone oxidoreductase, using light energy to abstract electrons from H(2)O, generating a proton gradient subsequently used for ATP formation. The polypeptide is Photosystem II reaction center protein Y (Thermosynechococcus vestitus (strain NIES-2133 / IAM M-273 / BP-1)).